A 143-amino-acid chain; its full sequence is Large ribosomal subunit protein uL11 (143 aa).

Belongs to the universal ribosomal protein uL11 family. In terms of assembly, part of the ribosomal stalk of the 50S ribosomal subunit. Interacts with L10 and the large rRNA to form the base of the stalk. L10 forms an elongated spine to which L12 dimers bind in a sequential fashion forming a multimeric L10(L12)X complex. Post-translationally, one or more lysine residues are methylated.

In terms of biological role, forms part of the ribosomal stalk which helps the ribosome interact with GTP-bound translation factors. This Dechloromonas aromatica (strain RCB) protein is Large ribosomal subunit protein uL11.